Reading from the N-terminus, the 351-residue chain is SH3 domain-containing protein 3 (351 aa).

Coiled coils occupy residues 1-21 (MDAF…QQLA) and 193-213 (LQLA…LGKE). The 237-residue stretch at 31–267 (YESSDVMVID…MVTEKQHKES (237 aa)) folds into the BAR domain. Residues 281 to 340 (TSYFLAEVIHPFSAASEKELDLDKGDYIVVRKVSQTGWAEGECKGKAGWFPMAYIEKRQR) enclose the SH3 domain.

Interacts with FREE1. Interacts (via SH3 domain) with DRP2A/ADL6. Binds to SH3P2. As to expression, detected in all tissues except seedlings.

The protein localises to the cytoplasmic vesicle. Its subcellular location is the clathrin-coated vesicle. In terms of biological role, may be involved in the recruitment of DRP2A to the accessory protein complex and in the negative regulation of its GTPase activity. This chain is SH3 domain-containing protein 3, found in Arabidopsis thaliana (Mouse-ear cress).